The sequence spans 916 residues: Translation initiation factor IF-2 (916 aa).

Positions 58–317 (LEAEGHLPGA…GVTVPRGDGG (260 aa)) are disordered. Residues 120 to 142 (EKVAASEAADAKPAAGAPADTAK) are compositionally biased toward low complexity. Pro residues predominate over residues 195–206 (SNIPRPAPPRPG). 2 stretches are compositionally biased toward gly residues: residues 214 to 227 (RPGG…GGRP) and 235 to 282 (SAGG…GRGG). Residues 283-294 (GKSKARKSKRAK) are compositionally biased toward basic residues. One can recognise a tr-type G domain in the interval 409 to 583 (IRPPVVTVMG…LTADAGLDLR (175 aa)). Residues 418–425 (GHVDHGKT) form a G1 region. 418 to 425 (GHVDHGKT) provides a ligand contact to GTP. Residues 443–447 (GITQH) are G2. A G3 region spans residues 468–471 (DTPG). Residues 468–472 (DTPGH) and 522–525 (NKVD) contribute to the GTP site. The G4 stretch occupies residues 522–525 (NKVD). Residues 558–560 (SAR) are G5.

Belongs to the TRAFAC class translation factor GTPase superfamily. Classic translation factor GTPase family. IF-2 subfamily.

Its subcellular location is the cytoplasm. Functionally, one of the essential components for the initiation of protein synthesis. Protects formylmethionyl-tRNA from spontaneous hydrolysis and promotes its binding to the 30S ribosomal subunits. Also involved in the hydrolysis of GTP during the formation of the 70S ribosomal complex. This Leifsonia xyli subsp. xyli (strain CTCB07) protein is Translation initiation factor IF-2.